The following is a 182-amino-acid chain: Adenine phosphoribosyltransferase (182 aa).

The protein belongs to the purine/pyrimidine phosphoribosyltransferase family. As to quaternary structure, homodimer.

It localises to the cytoplasm. It catalyses the reaction AMP + diphosphate = 5-phospho-alpha-D-ribose 1-diphosphate + adenine. Its pathway is purine metabolism; AMP biosynthesis via salvage pathway; AMP from adenine: step 1/1. Its function is as follows. Catalyzes a salvage reaction resulting in the formation of AMP, that is energically less costly than de novo synthesis. The polypeptide is Adenine phosphoribosyltransferase (Koribacter versatilis (strain Ellin345)).